Consider the following 406-residue polypeptide: MSFRSVIQEVKGEIGAISRRGFRSRPGRVRRVAAAAEEPPDESSAAALVMRESCWTQLPPELLREVLARVEESEGWWPRRRDVVACAGVCRSWRGIVREIVRTPEASGNLTFPISLKQPGPRDAPMKCFIVRNRTTQTYYLYIGLTDALTDDGKFLLAARKCRRTTCTEYLISLDMNDISKRTDSYVGKLRSNFLGTKFTIYDAHPPYAGDVISKGQSARVIGSNHLSPRIPAGNYPVSHISYELNVLGSRGPRRMHCAMDSIPVSAIEQGGTAPTQTEFPLSYHESFTSIPFFKSKSVRANNSTASLLTQNGSKLVLKNKSPRWHEHLQCWCLNFHGRVTVASVKNFQLVASDESNPTNQEHDDVILQFGKVGKDMFTMDYRYPISAFQAFAICLSSFDTKIACE.

Positions S53 to G108 constitute an F-box domain.

The protein belongs to the TUB family. Ubiquitous.

The polypeptide is Tubby-like F-box protein 11 (TULP11) (Oryza sativa subsp. japonica (Rice)).